Reading from the N-terminus, the 494-residue chain is Probable cytosol aminopeptidase (494 aa).

Residues lysine 260 and aspartate 265 each coordinate Mn(2+). Lysine 272 is an active-site residue. Mn(2+)-binding residues include aspartate 283, aspartate 342, and glutamate 344. The active site involves arginine 346.

Belongs to the peptidase M17 family. Mn(2+) serves as cofactor.

It localises to the cytoplasm. The catalysed reaction is Release of an N-terminal amino acid, Xaa-|-Yaa-, in which Xaa is preferably Leu, but may be other amino acids including Pro although not Arg or Lys, and Yaa may be Pro. Amino acid amides and methyl esters are also readily hydrolyzed, but rates on arylamides are exceedingly low.. It carries out the reaction Release of an N-terminal amino acid, preferentially leucine, but not glutamic or aspartic acids.. Its function is as follows. Presumably involved in the processing and regular turnover of intracellular proteins. Catalyzes the removal of unsubstituted N-terminal amino acids from various peptides. This is Probable cytosol aminopeptidase from Bacillus mycoides (strain KBAB4) (Bacillus weihenstephanensis).